Here is an 866-residue protein sequence, read N- to C-terminus: MSSPARSPSVGGATPKQGARTPTRGIASQDVETPMRMGPGRAVRPSDNISLPPTSPGNISLPATSPARGLGANMSEIDLSSPLNYGTPSSMGSIRTPRSGIRGTPLRARPDIRTDKRIRQVAIGGGSGLEPIPEKGSETTDPVSESSQAPQLVVWGTNVVVSQCKSKFKSFIMRFIDPSAEQDEISENIDVNQPLYLQKLEEIHTLEEPYLNLNCAHLKTFDQDLYRQLICYPQEVIPGFDMAINEMFFERYPAALLEHQIQVRPFNADKTRNMRSLNPEDMDQLISISGMVIRSSNVIPEMREAFFSCNICSFSTTVEVDRGRINQPTLCTNCNTNHCFRLIHNRSEFTDKQLVKLQESPDDMAAGQTPHNVLLYAHNDLVDKVQPGDRVTVTGIYRATPLKTGGLSSSVKSVYKTHVDVVHFRKVDNKRLYEDEEGKDHIFPPERVELLQLLAKKPDIYDRLARAIAPSIYENDDIKKGILLQLFGGTKKKHATLGRQNFRSEIHLLLCGDPGTSKSQMLQYVFNLVPRSQYTSGRGSSAVGLTAYVTKDPETRQLVLQTGALVLADNGVCCIDEFDKMNDSTRSVLHEVMEQQTLSIAKAGIICQLNARTSILAAANPAESQWNKRKNIIDNVQLPHTLLSRFDLIFLVLDPQDEIFDKRLASHLVSLYYVTRHEEEDTMFDMSVLRDYIAYAREHLSPTLSDEAQQRLIQAYVDMRKVGAGRGQISAYPRQLESLIRLSEAHAKVRLSNQVELLDVEEAWRLHREALKQSATDPLSGKIDVGILTTGLSTAARKKRADLVAAIKENLKKKGKVLTVPYQKLFSDIKEGSQIMITREQFEDALKEVQDEGAIVVMGKNTIRIC.

3 disordered regions span residues 1–67, 81–107, and 124–145; these read MSSP…TSPA, SPLN…TPLR, and GGGS…PVSE. Polar residues-rich tracts occupy residues 47–63 and 81–93; these read DNIS…SLPA and SPLN…SMGS. 2 positions are modified to phosphoserine: Ser-55 and Ser-81. Residue Thr-87 is modified to Phosphothreonine. Residues 460-669 enclose the MCM domain; it reads IYDRLARAIA…FDKRLASHLV (210 aa). ATP is bound at residue 512–519; it reads GDPGTSKS. The short motif at 644 to 647 is the Arginine finger element; that stretch reads SRFD.

It belongs to the MCM family. As to quaternary structure, component of the Mcm2-7 complex. The complex forms a toroidal hexameric ring with the proposed subunit order Mcm2-Mcm6-Mcm4-Mcm7-Mcm3-Mcm5. In terms of processing, phosphorylated by the catalytic component of the Dbf4-dependent kinase (DDK) complex Cdc7.

The protein resides in the nucleus. It catalyses the reaction ATP + H2O = ADP + phosphate + H(+). Its function is as follows. Acts as a component of the Mcm2-7 complex (Mcm complex) which is the putative replicative helicase essential for 'once per cell cycle' DNA replication initiation and elongation in eukaryotic cells. The active ATPase sites in the Mcm2-7 ring are formed through the interaction surfaces of two neighboring subunits such that a critical structure of a conserved arginine finger motif is provided in trans relative to the ATP-binding site of the Walker A box of the adjacent subunit. The six ATPase active sites, however, are likely to contribute differentially to the complex helicase activity. Required for DNA replication and cell proliferation. Essential role in mitotic DNA replication but not in endoreplication. The polypeptide is DNA replication licensing factor MCM4 (dpa) (Drosophila melanogaster (Fruit fly)).